The sequence spans 610 residues: MTATASHTRARPLGASEIEHATRIAEPDFDLLDALYRTDDPDDQARLLARVVLSAFDNYYAVSRRIPALAQAAFEARDWPVTVRLSKIRIGLYTACIDQLVPLLKAGLPELTTDEQLWPTAEAELLAAIEGRYEADFAFAFWQSLRRKLVSDEWRPVSYDAGSTARRTTSPAAVLKTTATTLPITAEVIAGILDEAGFRVPWRDRDGDAALAAQAIETALEPLSPRPGEPVKIEIADSGFLRNRGACLVGRIKLRDRGDMPMRNLPLLIALLNEKDGLVVDAVLTDSDELQYAFSSTLANYHATNPRYHELARLLYELMPKRPLGTQYSCIGFHHLGKVAVMSEILAEHRKTKEKLATAPGFKGTVAIAFTMPSSAYVLKIIRDHPTDDYKFDYFDGLDEVLRKYNLVHEIDRAGSMLDNIIYSNVKLDRAMFAPELLDELLEAGIGTVTLDRGALVFRHLIVQIKLTPLPLYLANASAAESRAAVINLGDCIKNNAAADIFNKDLDGRNYGVSRIRKVYLFDYDAVEPLTSVTVSRDGAAPGEFDNGMVFRPQEMLEGLRIDDPGLRRAFRDAHPELMQADYWEGMQQALRDGKVPKVMNYPASRRLRR.

Residues 359 to 365 and lysine 380 contribute to the ATP site; that span reads APGFKGT. The active site involves aspartate 419.

Belongs to the AceK family.

It is found in the cytoplasm. It carries out the reaction L-seryl-[isocitrate dehydrogenase] + ATP = O-phospho-L-seryl-[isocitrate dehydrogenase] + ADP + H(+). Functionally, bifunctional enzyme which can phosphorylate or dephosphorylate isocitrate dehydrogenase (IDH) on a specific serine residue. This is a regulatory mechanism which enables bacteria to bypass the Krebs cycle via the glyoxylate shunt in response to the source of carbon. When bacteria are grown on glucose, IDH is fully active and unphosphorylated, but when grown on acetate or ethanol, the activity of IDH declines drastically concomitant with its phosphorylation. The protein is Isocitrate dehydrogenase kinase/phosphatase of Rhodopseudomonas palustris (strain ATCC BAA-98 / CGA009).